The sequence spans 185 residues: Elongation factor P (185 aa).

The protein belongs to the elongation factor P family.

The protein localises to the cytoplasm. It functions in the pathway protein biosynthesis; polypeptide chain elongation. Functionally, involved in peptide bond synthesis. Stimulates efficient translation and peptide-bond synthesis on native or reconstituted 70S ribosomes in vitro. Probably functions indirectly by altering the affinity of the ribosome for aminoacyl-tRNA, thus increasing their reactivity as acceptors for peptidyl transferase. This Dechloromonas aromatica (strain RCB) protein is Elongation factor P.